The sequence spans 206 residues: Enterobactin synthase component D (206 aa).

Residues D107, E109, and E152 each contribute to the Mg(2+) site.

This sequence belongs to the P-Pant transferase superfamily. EntD family. As to quaternary structure, entB, EntD, EntE, and EntF form a multienzyme complex called enterobactin synthase. It depends on Mg(2+) as a cofactor.

It localises to the membrane. The catalysed reaction is apo-[aryl-carrier protein] + CoA = holo-[aryl-carrier protein] + adenosine 3',5'-bisphosphate + H(+). It carries out the reaction apo-[peptidyl-carrier protein] + CoA = holo-[peptidyl-carrier protein] + adenosine 3',5'-bisphosphate + H(+). The protein operates within siderophore biosynthesis; enterobactin biosynthesis. In terms of biological role, involved in the biosynthesis of the siderophore enterobactin (enterochelin), which is a macrocyclic trimeric lactone of N-(2,3-dihydroxybenzoyl)-serine. The serine trilactone serves as a scaffolding for the three catechol functionalities that provide hexadentate coordination for the tightly ligated iron(2+) atoms. Plays an essential role in the assembly of the enterobactin by catalyzing the transfer of the 4'-phosphopantetheine (Ppant) moiety from coenzyme A to the apo-domains of both EntB (ArCP domain) and EntF (PCP domain) to yield their holo-forms which make them competent for the activation of 2,3-dihydroxybenzoate (DHB) and L-serine, respectively. This is Enterobactin synthase component D from Escherichia coli (strain K12).